The sequence spans 225 residues: Thymidine kinase (225 aa).

Position 8–15 (8–15 (GPMFSGKT)) interacts with ATP. Residue Glu92 is the Proton acceptor of the active site. Tyr122 lines the substrate pocket. Residues Cys147 and Cys150 each contribute to the Zn(2+) site. 167 to 171 (KILVG) serves as a coordination point for substrate. Zn(2+) contacts are provided by Cys180 and Cys183. Polar residues predominate over residues 197-207 (SEQINNQTELS). Positions 197–225 (SEQINNQTELSEPTRQKESLKIKKRRIDS) are disordered. The span at 208-225 (EPTRQKESLKIKKRRIDS) shows a compositional bias: basic and acidic residues.

It belongs to the thymidine kinase family.

The catalysed reaction is thymidine + ATP = dTMP + ADP + H(+). In Acanthamoeba polyphaga mimivirus (APMV), this protein is Thymidine kinase (TK).